Reading from the N-terminus, the 67-residue chain is Large ribosomal subunit protein uL29 (67 aa).

The protein belongs to the universal ribosomal protein uL29 family.

In Ehrlichia canis (strain Jake), this protein is Large ribosomal subunit protein uL29.